Consider the following 320-residue polypeptide: Cytochrome f (320 aa).

The N-terminal stretch at 1–35 (MQNRNTFSWVKDQMSRFISVSIMIYVITRTSISNA) is a signal peptide. Residues tyrosine 36, cysteine 56, cysteine 59, and histidine 60 each coordinate heme. The helical transmembrane segment at 286-306 (VQGLLFFFASVILAQIFLVLK) threads the bilayer.

This sequence belongs to the cytochrome f family. The 4 large subunits of the cytochrome b6-f complex are cytochrome b6, subunit IV (17 kDa polypeptide, petD), cytochrome f and the Rieske protein, while the 4 small subunits are PetG, PetL, PetM and PetN. The complex functions as a dimer. The cofactor is heme.

The protein resides in the plastid. Its subcellular location is the chloroplast thylakoid membrane. Its function is as follows. Component of the cytochrome b6-f complex, which mediates electron transfer between photosystem II (PSII) and photosystem I (PSI), cyclic electron flow around PSI, and state transitions. This chain is Cytochrome f, found in Ceratophyllum demersum (Rigid hornwort).